A 492-amino-acid chain; its full sequence is MYIVQIASECAPVIKAGGLGDVVYGLSRELEIRGNCVELILPKYDCMRYDHVWGLHEAYLNLWVPWFGAAIHCTVYCGWVHGRVCFFIEPHSEDNFFNRGCYYGCDDDDMRFAFFSKAALEFLHQSNKRPDIIHCHDWQTGLIPVMLYEIYKYHGMDTQRVCYTIHNFKHQGIGGVKTLWATGLNREAYYFQDDKLRDDHNPFALNYMKGGIVYSNAVTTVSPNHALEAQYTDVGCGLGHTLYLHKEKFSGVLNGIDYDFWNPEIDRHIPDNYSQDDFEQKLYNKKALRERLLLQAADKPIIAYIGRLDNQKGVHLVHHAIYHALNKGAQFVLLGSATEAGINAHFRHEKQFLNSNPDVHLELGFNEELSHLIYAGADMIVVPSNYEPCGLTQMIGLKYGTVPIVRGVGGLVNTVFDRDYDQNLPPEKRNGYVFYQSDNQALESAMNRAIDLWYQSPEQFQQLAIQGMKYDYSWNNPGTEYLNIYEWIKYKW.

Lys15 serves as a coordination point for ADP-alpha-D-glucose.

The protein belongs to the glycosyltransferase 1 family. Bacterial/plant glycogen synthase subfamily.

The catalysed reaction is [(1-&gt;4)-alpha-D-glucosyl](n) + ADP-alpha-D-glucose = [(1-&gt;4)-alpha-D-glucosyl](n+1) + ADP + H(+). Its pathway is glycan biosynthesis; glycogen biosynthesis. Functionally, synthesizes alpha-1,4-glucan chains using ADP-glucose. The chain is Probable glycogen synthase 2 (glgA2) from Nostoc sp. (strain PCC 7120 / SAG 25.82 / UTEX 2576).